Here is a 376-residue protein sequence, read N- to C-terminus: Flap endonuclease 1 (376 aa).

Residues 1–105 (MGIKGLSKLL…GELNKRKENA (105 aa)) are N-domain. Residue Asp34 participates in Mg(2+) binding. 2 residues coordinate DNA: Arg47 and Arg71. Residues Asp87, Glu159, Glu161, Asp180, and Asp182 each coordinate Mg(2+). The I-domain stretch occupies residues 123-254 (QAKKLMKRTA…ITAFELIQQY (132 aa)). Residue Glu159 coordinates DNA. Gly232 and Asp234 together coordinate DNA. Residue Asp234 coordinates Mg(2+). Residues 336–344 (AQGRLDSFF) form an interaction with PCNA region. The disordered stretch occupies residues 352–376 (SKSEAASGVKRKKPTTKAKESRKKK). Positions 360-376 (VKRKKPTTKAKESRKKK) are enriched in basic residues.

It belongs to the XPG/RAD2 endonuclease family. FEN1 subfamily. In terms of assembly, interacts with PCNA. Three molecules of FEN1 bind to one PCNA trimer with each molecule binding to one PCNA monomer. PCNA stimulates the nuclease activity without altering cleavage specificity. Requires Mg(2+) as cofactor. Post-translationally, phosphorylated. Phosphorylation upon DNA damage induces relocalization to the nuclear plasma.

It is found in the nucleus. Its subcellular location is the nucleolus. The protein localises to the nucleoplasm. The protein resides in the mitochondrion. Its function is as follows. Structure-specific nuclease with 5'-flap endonuclease and 5'-3' exonuclease activities involved in DNA replication and repair. During DNA replication, cleaves the 5'-overhanging flap structure that is generated by displacement synthesis when DNA polymerase encounters the 5'-end of a downstream Okazaki fragment. It enters the flap from the 5'-end and then tracks to cleave the flap base, leaving a nick for ligation. Also involved in the long patch base excision repair (LP-BER) pathway, by cleaving within the apurinic/apyrimidinic (AP) site-terminated flap. Acts as a genome stabilization factor that prevents flaps from equilibrating into structures that lead to duplications and deletions. Also possesses 5'-3' exonuclease activity on nicked or gapped double-stranded DNA, and exhibits RNase H activity. Also involved in replication and repair of rDNA and in repairing mitochondrial DNA. The chain is Flap endonuclease 1 from Entamoeba dispar (strain ATCC PRA-260 / SAW760).